We begin with the raw amino-acid sequence, 347 residues long: NADH-ubiquinone oxidoreductase chain 2 (347 aa).

The next 11 membrane-spanning stretches (helical) occupy residues 3-23 (PPIFIIIMSTVISGTVIVMTS), 25-45 (HWMLTWIGFEMNMLAIIPILM), 59-79 (YFLTQATASMLLMMGIIINLL), 96-116 (ILMTTALAMKLGLAPFHFWVP), 122-142 (ISLSSGMILLTWQKIAPLSIL), 149-169 (INPHLLLPMAILSVLIGGWGG), 178-198 (IMAYSSIAHMGWMAAILLYNP), 201-221 (MFLNLIIYITMTLTTFMLFML), 237-257 (APLITSLILTLMLSLGGLPPL), 274-294 (EMIILPTFLAITALLNLYFYM), and 323-343 (TIFLPPLIIISTMMLPLTPMI).

Belongs to the complex I subunit 2 family. In terms of assembly, core subunit of respiratory chain NADH dehydrogenase (Complex I) which is composed of 45 different subunits. Interacts with TMEM242.

Its subcellular location is the mitochondrion inner membrane. It catalyses the reaction a ubiquinone + NADH + 5 H(+)(in) = a ubiquinol + NAD(+) + 4 H(+)(out). Functionally, core subunit of the mitochondrial membrane respiratory chain NADH dehydrogenase (Complex I) which catalyzes electron transfer from NADH through the respiratory chain, using ubiquinone as an electron acceptor. Essential for the catalytic activity and assembly of complex I. This Viverra tangalunga (Malayan civet) protein is NADH-ubiquinone oxidoreductase chain 2.